We begin with the raw amino-acid sequence, 101 residues long: Small ribosomal subunit protein uS14A (101 aa).

The interval 35-56 (TSSYEQRLDAQRALSRQPRDAS) is disordered.

The protein belongs to the universal ribosomal protein uS14 family. In terms of assembly, part of the 30S ribosomal subunit. Contacts proteins S3 and S10.

Its function is as follows. Binds 16S rRNA, required for the assembly of 30S particles and may also be responsible for determining the conformation of the 16S rRNA at the A site. This Mycobacterium marinum (strain ATCC BAA-535 / M) protein is Small ribosomal subunit protein uS14A.